Here is a 171-residue protein sequence, read N- to C-terminus: tRNA-splicing endonuclease (171 aa).

Residues Y110, H117, and K148 contribute to the active site.

The protein belongs to the tRNA-intron endonuclease family. Archaeal short subfamily. Homotetramer; although the tetramer contains four active sites, only two participate in the cleavage. Therefore, it should be considered as a dimer of dimers.

It catalyses the reaction pretRNA = a 3'-half-tRNA molecule with a 5'-OH end + a 5'-half-tRNA molecule with a 2',3'-cyclic phosphate end + an intron with a 2',3'-cyclic phosphate and a 5'-hydroxyl terminus.. Its function is as follows. Endonuclease that removes tRNA introns. Cleaves pre-tRNA at the 5'- and 3'-splice sites to release the intron. The products are an intron and two tRNA half-molecules bearing 2',3' cyclic phosphate and 5'-OH termini. Recognizes a pseudosymmetric substrate in which 2 bulged loops of 3 bases are separated by a stem of 4 bp. The polypeptide is tRNA-splicing endonuclease (Thermococcus onnurineus (strain NA1)).